Reading from the N-terminus, the 117-residue chain is Large ribosomal subunit protein bL20 (117 aa).

Belongs to the bacterial ribosomal protein bL20 family.

Binds directly to 23S ribosomal RNA and is necessary for the in vitro assembly process of the 50S ribosomal subunit. It is not involved in the protein synthesizing functions of that subunit. This chain is Large ribosomal subunit protein bL20, found in Leptospira borgpetersenii serovar Hardjo-bovis (strain JB197).